A 311-amino-acid polypeptide reads, in one-letter code: Homoserine kinase (311 aa).

Residue 88-98 participates in ATP binding; that stretch reads PEGLGLGSSGA.

The protein belongs to the GHMP kinase family. Homoserine kinase subfamily.

It is found in the cytoplasm. It carries out the reaction L-homoserine + ATP = O-phospho-L-homoserine + ADP + H(+). It participates in amino-acid biosynthesis; L-threonine biosynthesis; L-threonine from L-aspartate: step 4/5. Catalyzes the ATP-dependent phosphorylation of L-homoserine to L-homoserine phosphate. The protein is Homoserine kinase of Saccharolobus islandicus (strain L.S.2.15 / Lassen #1) (Sulfolobus islandicus).